A 324-amino-acid chain; its full sequence is Glyoxylate/hydroxypyruvate reductase B (324 aa).

Catalysis depends on residues Arg237 and Glu266. His285 serves as the catalytic Proton donor.

Belongs to the D-isomer specific 2-hydroxyacid dehydrogenase family. GhrB subfamily. In terms of assembly, homodimer.

Its subcellular location is the cytoplasm. The catalysed reaction is glycolate + NADP(+) = glyoxylate + NADPH + H(+). It catalyses the reaction (R)-glycerate + NAD(+) = 3-hydroxypyruvate + NADH + H(+). The enzyme catalyses (R)-glycerate + NADP(+) = 3-hydroxypyruvate + NADPH + H(+). Catalyzes the NADPH-dependent reduction of glyoxylate and hydroxypyruvate into glycolate and glycerate, respectively. In Salmonella gallinarum (strain 287/91 / NCTC 13346), this protein is Glyoxylate/hydroxypyruvate reductase B.